Here is a 34-residue protein sequence, read N- to C-terminus: Photosystem II reaction center protein M (34 aa).

A helical transmembrane segment spans residues 5–25 (ILAFIATVLFILVPTAFLLII).

The protein belongs to the PsbM family. As to quaternary structure, PSII is composed of 1 copy each of membrane proteins PsbA, PsbB, PsbC, PsbD, PsbE, PsbF, PsbH, PsbI, PsbJ, PsbK, PsbL, PsbM, PsbT, PsbX, PsbY, PsbZ, Psb30/Ycf12, at least 3 peripheral proteins of the oxygen-evolving complex and a large number of cofactors. It forms dimeric complexes.

The protein localises to the plastid. Its subcellular location is the chloroplast thylakoid membrane. Its function is as follows. One of the components of the core complex of photosystem II (PSII). PSII is a light-driven water:plastoquinone oxidoreductase that uses light energy to abstract electrons from H(2)O, generating O(2) and a proton gradient subsequently used for ATP formation. It consists of a core antenna complex that captures photons, and an electron transfer chain that converts photonic excitation into a charge separation. This subunit is found at the monomer-monomer interface. This is Photosystem II reaction center protein M from Piper cenocladum (Ant piper).